The primary structure comprises 197 residues: GTP cyclohydrolase 1 (197 aa).

Zn(2+)-binding residues include C88, H91, and C160.

The protein belongs to the GTP cyclohydrolase I family. As to quaternary structure, homomer.

The enzyme catalyses GTP + H2O = 7,8-dihydroneopterin 3'-triphosphate + formate + H(+). It functions in the pathway cofactor biosynthesis; 7,8-dihydroneopterin triphosphate biosynthesis; 7,8-dihydroneopterin triphosphate from GTP: step 1/1. In Clostridium beijerinckii (strain ATCC 51743 / NCIMB 8052) (Clostridium acetobutylicum), this protein is GTP cyclohydrolase 1.